The following is a 212-amino-acid chain: Acyl-homoserine-lactone synthase (212 aa).

It belongs to the autoinducer synthase family.

It catalyses the reaction a fatty acyl-[ACP] + S-adenosyl-L-methionine = an N-acyl-L-homoserine lactone + S-methyl-5'-thioadenosine + holo-[ACP] + H(+). Its function is as follows. Required for the synthesis of autoinducer molecules which bind to RaiR and that are involved in the restriction of nodule number. The sequence is that of Acyl-homoserine-lactone synthase (raiI) from Rhizobium etli.